We begin with the raw amino-acid sequence, 482 residues long: tRNA sulfurtransferase (482 aa).

Positions Leu-61–Arg-165 constitute a THUMP domain. ATP-binding positions include Leu-183 to Ile-184, Lys-265, Gly-287, and Gln-296. Cysteines 344 and 456 form a disulfide. The region spanning Phe-404–Pro-482 is the Rhodanese domain. The Cysteine persulfide intermediate role is filled by Cys-456.

It belongs to the ThiI family.

It is found in the cytoplasm. The enzyme catalyses [ThiI sulfur-carrier protein]-S-sulfanyl-L-cysteine + a uridine in tRNA + 2 reduced [2Fe-2S]-[ferredoxin] + ATP + H(+) = [ThiI sulfur-carrier protein]-L-cysteine + a 4-thiouridine in tRNA + 2 oxidized [2Fe-2S]-[ferredoxin] + AMP + diphosphate. The catalysed reaction is [ThiS sulfur-carrier protein]-C-terminal Gly-Gly-AMP + S-sulfanyl-L-cysteinyl-[cysteine desulfurase] + AH2 = [ThiS sulfur-carrier protein]-C-terminal-Gly-aminoethanethioate + L-cysteinyl-[cysteine desulfurase] + A + AMP + 2 H(+). It functions in the pathway cofactor biosynthesis; thiamine diphosphate biosynthesis. In terms of biological role, catalyzes the ATP-dependent transfer of a sulfur to tRNA to produce 4-thiouridine in position 8 of tRNAs, which functions as a near-UV photosensor. Also catalyzes the transfer of sulfur to the sulfur carrier protein ThiS, forming ThiS-thiocarboxylate. This is a step in the synthesis of thiazole, in the thiamine biosynthesis pathway. The sulfur is donated as persulfide by IscS. The protein is tRNA sulfurtransferase of Salmonella typhimurium (strain LT2 / SGSC1412 / ATCC 700720).